Consider the following 357-residue polypeptide: uncharacterized protein (357 aa).

The stretch at 173 to 211 (VLPILEKLMQDESLYVRKSVANNLNDISKTHPHLLRKVA) is one HEAT repeat.

This is an uncharacterized protein from Bacillus subtilis (strain 168).